Here is a 94-residue protein sequence, read N- to C-terminus: PqqA binding protein (94 aa).

Belongs to the PqqD family. In terms of assembly, monomer. Interacts with PqqE.

It participates in cofactor biosynthesis; pyrroloquinoline quinone biosynthesis. In terms of biological role, functions as a PqqA binding protein and presents PqqA to PqqE, in the pyrroloquinoline quinone (PQQ) biosynthetic pathway. This Pseudomonas syringae pv. syringae (strain B728a) protein is PqqA binding protein.